The sequence spans 848 residues: Adenylate cyclase (848 aa).

A catalytic region spans residues 1 to 535 (MYLYIETLKQ…DVSHHFPLRL (535 aa)). The segment at 541–848 (KALYSPCEIR…DTPLLQQYFS (308 aa)) is regulatory. A Phosphohistidine; by CRR modification is found at H609.

Belongs to the adenylyl cyclase class-1 family.

The protein localises to the cytoplasm. It carries out the reaction ATP = 3',5'-cyclic AMP + diphosphate. The chain is Adenylate cyclase (cyaA) from Escherichia coli O157:H7.